A 190-amino-acid polypeptide reads, in one-letter code: MGIKEDNWIRKMAIEEGMIEPFADSQVKLHPETGEKLISYGLSSYGYDLRISREFKVFTNVYNSLVDPKCFTEDALISIVDDVCIIPPNSFALARSVEYFRIPRNVLTVCIGKSTYARCGLIVNVTPFEPEWEGYVTIEISNTTPLPAKVYANEGIAQVLFFEGDATCDVSYAERQGKYQKQQGITIPFV.

Residue 113-118 (KSTYAR) participates in dCTP binding. The Proton donor/acceptor role is filled by E139. 4 residues coordinate dCTP: Q158, Y172, K181, and Q182.

This sequence belongs to the dCTP deaminase family. Homotrimer.

The catalysed reaction is dCTP + H2O + H(+) = dUTP + NH4(+). The protein operates within pyrimidine metabolism; dUMP biosynthesis; dUMP from dCTP (dUTP route): step 1/2. Catalyzes the deamination of dCTP to dUTP. The chain is dCTP deaminase from Chlamydia trachomatis serovar A (strain ATCC VR-571B / DSM 19440 / HAR-13).